The sequence spans 497 residues: 4,4'-diaponeurosporene oxygenase (497 aa).

Position 7–19 (valine 7–isoleucine 19) interacts with FAD.

Belongs to the carotenoid/retinoid oxidoreductase family. CrtP subfamily. FAD is required as a cofactor.

It catalyses the reaction all-trans-4,4'-diaponeurosporene + 2 AH2 + 2 O2 = 4,4'-diaponeurosporenal + 2 A + 3 H2O. It participates in carotenoid biosynthesis; staphyloxanthin biosynthesis; staphyloxanthin from farnesyl diphosphate: step 3/5. Involved in the biosynthesis of the yellow-orange carotenoid staphyloxanthin, which plays a role in the virulence via its protective function against oxidative stress. Catalyzes the oxidation of the terminal methyl side group of 4,4'-diaponeurosporene to form 4,4'-diaponeurosporen-4-al. This chain is 4,4'-diaponeurosporene oxygenase, found in Staphylococcus aureus (strain bovine RF122 / ET3-1).